Here is a 2465-residue protein sequence, read N- to C-terminus: MKPSPHFPEIGKKPKDLIAKEHGFNIAAYISSGADVIAAALRKHVEEEARDLSGEAFLRFMEQLYEQICSLLQSNDVAENLLALRAIDALIDMPFGEGASKVSKFANFLRTVFEVKRDPEVLVPASAVLGHLAKAGGAMTADEVERQIKTALGWLGGDRVEYRRFASVLILKEMAENASTVFNVHVPEFVDAIWVALRDPKQAVRERAVEALRACLHVIEKRETRWRVQWYYRMCEAAQVGLGKNASVHSIHGSLLAVGELLRNTGEFMMSRYREVADIVLNYLRHRDQLVRRSITSLLPRIAHFLRDRFVTNYLKICMDHILFVLRTPDERASGFVALGEMAGALGAELVPYLPLITSHLHDAIAPRRGRPSLEAISCVGSFAKAMGPAMEPHIRGGLLDAMFSAGLSDKLVEALESISTSIPSLLPTIQERLLDCISQALPKSSVRPGAAVGRGSRSSSLQQFVDSGGPVLVQLALGTLANFNFKGHELLEFARESVILYLEDEDCSTRKAAATCCCKLVAHSLSASSSSQFSSNRPNRMGGAKRRRLVEEIVEKLLMAAVADADVGVRSSVFKALYRNPSFDDFLAQADIMTSIFVALNDEEYHVRELAISVAGRLSEKNPAYVLPALRRYLIQLLTYLDQSMDSKCREESARLLGCLIRSCARLILPYIAPIHKALVARLREGTGPNANNALAAGVLATVGELAKVGGFAMRQYLPELMPLVVDALLDGGAVSKREVAVATLGQVIQSTGYVISPYNEYPPLLGLLLKLLNGELEWSTRLEVLKVLGIMGALDPHAHKRNQHKLPGQHREVLRPTMETAQHIVSMEELPTDFWPSFSASEDYYSTVAISSLMRILHDPSLSSYHQMVVGSLIFIFKSMGLGCVPYLPKVLPELFRAVRMCEDGGLKEFITWKLGTLVSIVRQHIRKYLQEILSLVSELWTSSFSLPAPNRTVQGPQASPVLHLVEQLCLALNDEFRMYILHILPSCIQVLGDAERCNDYYYVPDILHTLEVFGGNLDEHMHLVAPVLVRLFKVELVDIRRRAIVTLTKLIPTVQVGTHVSVLVHHLKLVLDGNNDDLRKDAAEALCCLAHALGEDFTIFVSSIHKLLVKHHMRYRKWDEIENRLLRREPLISENLSVQKYTQCPPEVISDPLDDFGGVPSEEADETQRQPRSHQVNDVRLRSAGEASQRSTREDWAEWMRHFSIALLKESPSPALRTCARLAQLQPSVGRELFAAGFASCWAQMNETSQEQLVRSLKTAFSSQNIPPEILATLLNLAEFMEHDEKPLPIDTRLLGALAEKCRAFAKALHYKEMEFEAVCSKKMGANPVTVVESLIHINNQLHQHEAAIGILTYSQQHLEVQLKESWYEKLHRWDEALKAYKAKSSQASGPLQNLDATLGRMRCLAALARWEDLSALCREQWTGSEPSARLEMAPMAANAAWHMGEWDHMAEYVSRLDDGDENKLRILGNTTASGDGSSNGAFFRAVLSVRCKKYEEARVYVERARRCLATELAALVLESYERAYNNMVRVQQLSELEEVIDYCTLPMESPIADSRRELIRNMWNERIKGTKRNVEVWQALLAVRELVLPPNEDRDTWIKFAKLCWKSGRISQAKSTLVKLLQFDPESSPELTLYHGHPQVVLAYLKYQYAVGDELKRRDAFCRLQDLSVQLATATNSYSGTLASQVATSNAGVPLIARVYLTLASWKRALSPGLDDDSIQEILVSYKNATLNAKDWGKAWHLWALFNTEVMSRYTLRGRPDIAGKYVVAAVTGYFYSIACASTTKGVDDSLQDILRLLTLWFNHGATSEVQMALQKGFSLVNIEMWLVVLPQIIARIHSNNKIVRELIQSLLVRIGKDHPQALMYPLLVACKSISILRQRAAQEVVDKIRQHSGGLVDQAQLVSKELIRVAILWHEMWHEALEEASRMYFGEHNIEGMLAVLEPLHAMLERGPETIKENTFIQAYGHELLEAHECCLKYRATGEDAELTKAWDLYYHVFRRIDKQLPSLTTLDLHSVSPELLECRKLELAVPGTYSADAPLVTIEYFVPQLIVITSKQRPRKLTIHGSDGNDYAFLLKGHEDLRQDERVMQLFGLVNTLLENSRKTSEKDLSIQRYAVIPLSPNSGLIGWVPNCDTLHALIREYRDARKIFLNQEHRCMLSFAPDYDHLPLIAKVEVFQHALENSEGNDLAKVLWLKSRTSEVWLERRTNYTRSLAVMSMVGYLLGLGDRHPSNLMLDRYSGKILHIDFGDCFEASMNREKFPEKVPFRLTRMLVKAMEVSGIEGTFRTTCENVMQVLRTNKDSVMAMMEAFVHDPLINWRLFNFNEVPQVTNYGNAHSHTVVNSEEAANRELMQPPRGARERELLQAVNQLGDANEVLNERAVAVMARMSHKLTGRDFSSGSSLSGAGSSTQHGNEHLASGDTREVEPGLSVKVQVQRLILQATSHENLCQNYVGWCPFW.

11 HEAT repeats span residues 184–221 (VHVP…VIEK), 271–308 (SRYR…FLRD), 348–389 (AELV…AMGP), 549–587 (RLVE…FDDF), 588–625 (LAQA…KNPA), 717–755 (QYLP…STGY), 761–799 (NEYP…LDPH), 888–926 (PYLP…IVRQ), 981–1018 (MYIL…VFGG), 1022–1059 (EHMH…TVQV), and 1061–1098 (THVS…ALGE). The tract at residues 1158–1191 (DFGGVPSEEADETQRQPRSHQVNDVRLRSAGEAS) is disordered. The FAT domain maps to 1297–1877 (LLGALAEKCR…MYPLLVACKS (581 aa)). One can recognise a PI3K/PI4K catalytic domain in the interval 2051–2369 (FVPQLIVITS…PPRGAREREL (319 aa)). The interval 2057 to 2063 (VITSKQR) is G-loop. Residues 2230–2238 (GLGDRHPSN) are catalytic loop. Residues 2250–2275 (HIDFGDCFEASMNREKFPEKVPFRLT) are activation loop. The tract at residues 2401 to 2431 (RDFSSGSSLSGAGSSTQHGNEHLASGDTREV) is disordered. The segment covering 2404-2415 (SSGSSLSGAGSS) has biased composition (low complexity). One can recognise an FATC domain in the interval 2433-2465 (PGLSVKVQVQRLILQATSHENLCQNYVGWCPFW).

This sequence belongs to the PI3/PI4-kinase family. As to quaternary structure, the target of rapamycin complex 1 (TORC1) is composed of at least RAPTOR, LST8 and TOR.

The enzyme catalyses L-seryl-[protein] + ATP = O-phospho-L-seryl-[protein] + ADP + H(+). It carries out the reaction L-threonyl-[protein] + ATP = O-phospho-L-threonyl-[protein] + ADP + H(+). Insensitive to inhibition by rapamycin. In terms of biological role, component of TORC1 complex, which is an essential cell growth regulator that controls plant development. Acts through the phosphorylation of downstream effectors that are recruited by the binding partner RAPTOR. Acts by activating transcription, protein synthesis and ribosome biogenesis, and inhibiting mRNA degradation and autophagy. This chain is Serine/threonine-protein kinase TOR, found in Oryza sativa subsp. japonica (Rice).